The chain runs to 341 residues: Twinfilin-2 (341 aa).

ADF-H domains lie at 1–131 (ATEE…KHLS) and 169–305 (GLAF…DEVH). K6 is subject to N6-acetyllysine. Y301 is modified (phosphotyrosine). The segment at 314 to 341 (AFAKPKGPGGKRGHKRLIRGPGENGDDS) is disordered. The segment covering 322 to 331 (GGKRGHKRLI) has biased composition (basic residues). S341 carries the phosphoserine modification.

The protein belongs to the actin-binding proteins ADF family. Twinfilin subfamily. Interacts with G-actin; ADP-actin form and capping protein (CP). May also be able to interact with TWF1 and phosphoinositides, PI(4,5)P2. When bound to PI(4,5)P2, it is down-regulated. Interacts with MYO7A. Phosphorylated on both serine and threonine residues.

It is found in the cytoplasm. The protein resides in the cytoskeleton. The protein localises to the perinuclear region. It localises to the cell projection. Its subcellular location is the stereocilium. Actin-binding protein involved in motile and morphological processes. Inhibits actin polymerization, likely by sequestering G-actin. By capping the barbed ends of filaments, it also regulates motility. Seems to play an important role in clathrin-mediated endocytosis and distribution of endocytic organelles. May play a role in regulating the mature length of the middle and short rows of stereocilia. In Pongo abelii (Sumatran orangutan), this protein is Twinfilin-2 (TWF2).